The sequence spans 71 residues: Large ribosomal subunit protein bL31 (71 aa).

Positions 16, 18, 36, and 39 each coordinate Zn(2+).

It belongs to the bacterial ribosomal protein bL31 family. Type A subfamily. In terms of assembly, part of the 50S ribosomal subunit. It depends on Zn(2+) as a cofactor.

Binds the 23S rRNA. In Petrotoga mobilis (strain DSM 10674 / SJ95), this protein is Large ribosomal subunit protein bL31.